A 548-amino-acid chain; its full sequence is Putative F-box protein At1g33020 (548 aa).

The F-box domain occupies 4–53 (AENLDSIPTDLILEIFSRMSTKSIGRCRCVSKLWKSMLGHPYFTELFLTR). The disordered stretch occupies residues 380 to 404 (KPISPPKQKPKPPSTETSSREDHQG). Residues 382-392 (ISPPKQKPKPP) are compositionally biased toward pro residues.

This chain is Putative F-box protein At1g33020, found in Arabidopsis thaliana (Mouse-ear cress).